We begin with the raw amino-acid sequence, 401 residues long: Arylacetamide deacetylase-like 2 (401 aa).

A signal peptide spans 1–18; that stretch reads MGLKALCLGLLCVLFVSH. Residues 111–113 carry the Involved in the stabilization of the negatively charged intermediate by the formation of the oxyanion hole motif; sequence HGG. A disulfide bridge connects residues Cys-116 and Cys-338. Active-site residues include Ser-189, Asp-341, and His-371.

Belongs to the 'GDXG' lipolytic enzyme family.

The protein localises to the secreted. The sequence is that of Arylacetamide deacetylase-like 2 (AADACL2) from Homo sapiens (Human).